A 282-amino-acid chain; its full sequence is MSVRLSLPAPAKLNLFLHILGRRDDGYHELQTLFQFLDHGDELHFEARQDGQVRLHTEIAGVPHDSNLIVRAARGLQEASGSPQGVDIWLDKRLPMGGGIGGGSSDAATTLLALNHLWQLGWDEDRIAALGLRLGADVPVFTRGRAAFAEGVGEKLTPVDIPEPWYLVVVPQVLVSTAEIFSDPLLTRDSPAIKVRTVLEGDSRNDCQPVVERRYPEVRNALILLNKFVSARLTGTGGCVFGSFPNKAEADKVSALLPDHLQRFVAKGSNVSMLHRKLETLV.

Lys-12 is a catalytic residue. 95-105 (PMGGGIGGGSS) contributes to the ATP binding site. The active site involves Asp-137.

The protein belongs to the GHMP kinase family. IspE subfamily.

It carries out the reaction 4-CDP-2-C-methyl-D-erythritol + ATP = 4-CDP-2-C-methyl-D-erythritol 2-phosphate + ADP + H(+). It participates in isoprenoid biosynthesis; isopentenyl diphosphate biosynthesis via DXP pathway; isopentenyl diphosphate from 1-deoxy-D-xylulose 5-phosphate: step 3/6. Functionally, catalyzes the phosphorylation of the position 2 hydroxy group of 4-diphosphocytidyl-2C-methyl-D-erythritol. The chain is 4-diphosphocytidyl-2-C-methyl-D-erythritol kinase from Pseudomonas aeruginosa (strain LESB58).